The following is a 109-amino-acid chain: Sperm-specific class P protein 10 (109 aa).

The 108-residue stretch at 2 to 109 (SLTADPPACT…TVTIPMSATA (108 aa)) folds into the MSP domain.

In terms of tissue distribution, expressed at higher level in testis.

In Caenorhabditis elegans, this protein is Sperm-specific class P protein 10 (ssp-10).